Consider the following 95-residue polypeptide: Protein TusB (95 aa).

It belongs to the DsrH/TusB family. As to quaternary structure, heterohexamer, formed by a dimer of trimers. The hexameric TusBCD complex contains 2 copies each of TusB, TusC and TusD. The TusBCD complex interacts with TusE.

The protein localises to the cytoplasm. In terms of biological role, part of a sulfur-relay system required for 2-thiolation of 5-methylaminomethyl-2-thiouridine (mnm(5)s(2)U) at tRNA wobble positions. The polypeptide is Protein TusB (Shigella dysenteriae serotype 1 (strain Sd197)).